The following is a 125-amino-acid chain: Large ribosomal subunit protein bL19 (125 aa).

Belongs to the bacterial ribosomal protein bL19 family.

Its function is as follows. This protein is located at the 30S-50S ribosomal subunit interface and may play a role in the structure and function of the aminoacyl-tRNA binding site. The protein is Large ribosomal subunit protein bL19 of Ehrlichia chaffeensis (strain ATCC CRL-10679 / Arkansas).